Reading from the N-terminus, the 487-residue chain is MTELFIDGAWRDGAGPVFASRNPGTGEPVWEGAGASADDVERAVASARRAFAAWSALDLDARCAIVKRFAALLVERKEALATMIGRETGKPLWEARTEVASMAAKVDVSIAAYHERTGERRSPTADGVAVLRHRPHGVVAVFGPYNFPGHLPNGHIVPALIAGNTVVFKPSELAPGVARATVEIWRDAGLPAGVLNLVQGEKDTGVALANHRQIDGLFFTGSSDTGTLLHRQFGGRPEIVLALEMGGNNPLVVADVEDIDAAVHHAIQSAFLSAGQRCTCARRILVPRGAFGDRFLERFADVASRITADVYDADPQPFMGAVISARAASRLVAAQAKLLELGAAPIIEMRQRDPALGFVNASILDVTPVRELPDEEHFGPLAQIVRYTDLDDAIARANDTAFGLSAGLLADDETVWNTFRRAIRAGIVNWNRPTNGASSAAPFGGAGRSGNHRPSAYYAADYCAYPMASVESAQLQMPANLSPGLHF.

221–226 (GSSDTG) is an NAD(+) binding site. Catalysis depends on residues Glu-244 and Cys-278.

The protein belongs to the aldehyde dehydrogenase family. AstD subfamily.

It catalyses the reaction N-succinyl-L-glutamate 5-semialdehyde + NAD(+) + H2O = N-succinyl-L-glutamate + NADH + 2 H(+). It functions in the pathway amino-acid degradation; L-arginine degradation via AST pathway; L-glutamate and succinate from L-arginine: step 4/5. Functionally, catalyzes the NAD-dependent reduction of succinylglutamate semialdehyde into succinylglutamate. This is N-succinylglutamate 5-semialdehyde dehydrogenase from Burkholderia pseudomallei (strain 1106a).